The chain runs to 456 residues: Putative E3 ubiquitin-protein ligase XBAT31 (456 aa).

5 ANK repeats span residues 45-74 (DRHS…NPDL), 78-107 (HKQT…NILM), 112-141 (NRRT…SSPV), 157-186 (KGAT…LVCA), and 194-224 (PGST…RLQR). An RING-type zinc finger spans residues 319-368 (CCICFEQVCTIEVKDCGHQMCAQCTLALCCHNKPNPTTSTVTPPVCPFCR).

It carries out the reaction S-ubiquitinyl-[E2 ubiquitin-conjugating enzyme]-L-cysteine + [acceptor protein]-L-lysine = [E2 ubiquitin-conjugating enzyme]-L-cysteine + N(6)-ubiquitinyl-[acceptor protein]-L-lysine.. The protein operates within protein modification; protein ubiquitination. No E3 ubiquitin-protein ligase activity observed when associated with the E2 enzyme UBC8 in vitro. This Arabidopsis thaliana (Mouse-ear cress) protein is Putative E3 ubiquitin-protein ligase XBAT31 (XBAT31).